Here is a 394-residue protein sequence, read N- to C-terminus: Mitogen-activated protein kinase 2 (394 aa).

Over residues 1-31 (MRMEGGGGGGHGHHGGGGGGHGHHGGIGGGE) the composition is skewed to gly residues. The interval 1 to 33 (MRMEGGGGGGHGHHGGGGGGHGHHGGIGGGEAQ) is disordered. Residues 61–347 (VPPIRPVGRG…VDEALCHPYL (287 aa)) form the Protein kinase domain. Residues 67–75 (VGRGACGII) and Lys-90 each bind ATP. Residue Asp-187 is the Proton acceptor of the active site. At Tyr-221 the chain carries Phosphotyrosine.

This sequence belongs to the protein kinase superfamily. CMGC Ser/Thr protein kinase family. MAP kinase subfamily. Post-translationally, the phosphorylation on Tyr-221 activates the enzyme. A conserved Thr, which must also be phosphorylated to activate the enzyme in closely related sequences, is replaced by Met-219 in this sequence.

The catalysed reaction is L-seryl-[protein] + ATP = O-phospho-L-seryl-[protein] + ADP + H(+). It catalyses the reaction L-threonyl-[protein] + ATP = O-phospho-L-threonyl-[protein] + ADP + H(+). This Oryza sativa subsp. japonica (Rice) protein is Mitogen-activated protein kinase 2 (MPK2).